The sequence spans 276 residues: Ribosomal RNA small subunit methyltransferase A (276 aa).

Residues N27, L29, G54, E75, D101, and N123 each contribute to the S-adenosyl-L-methionine site.

The protein belongs to the class I-like SAM-binding methyltransferase superfamily. rRNA adenine N(6)-methyltransferase family. RsmA subfamily.

The protein localises to the cytoplasm. It carries out the reaction adenosine(1518)/adenosine(1519) in 16S rRNA + 4 S-adenosyl-L-methionine = N(6)-dimethyladenosine(1518)/N(6)-dimethyladenosine(1519) in 16S rRNA + 4 S-adenosyl-L-homocysteine + 4 H(+). Specifically dimethylates two adjacent adenosines (A1518 and A1519) in the loop of a conserved hairpin near the 3'-end of 16S rRNA in the 30S particle. May play a critical role in biogenesis of 30S subunits. This Bartonella tribocorum (strain CIP 105476 / IBS 506) protein is Ribosomal RNA small subunit methyltransferase A.